The sequence spans 269 residues: Formamidopyrimidine-DNA glycosylase (269 aa).

The active-site Schiff-base intermediate with DNA is the proline 2. Glutamate 3 acts as the Proton donor in catalysis. Lysine 57 functions as the Proton donor; for beta-elimination activity in the catalytic mechanism. Positions 90, 109, and 150 each coordinate DNA. The FPG-type zinc-finger motif lies at 235-269 (QVYGRKGEPCRVCGTPIVATKHAQRATFYCRQCQK). Catalysis depends on arginine 259, which acts as the Proton donor; for delta-elimination activity.

It belongs to the FPG family. As to quaternary structure, monomer. Zn(2+) serves as cofactor.

It carries out the reaction Hydrolysis of DNA containing ring-opened 7-methylguanine residues, releasing 2,6-diamino-4-hydroxy-5-(N-methyl)formamidopyrimidine.. The enzyme catalyses 2'-deoxyribonucleotide-(2'-deoxyribose 5'-phosphate)-2'-deoxyribonucleotide-DNA = a 3'-end 2'-deoxyribonucleotide-(2,3-dehydro-2,3-deoxyribose 5'-phosphate)-DNA + a 5'-end 5'-phospho-2'-deoxyribonucleoside-DNA + H(+). Its function is as follows. Involved in base excision repair of DNA damaged by oxidation or by mutagenic agents. Acts as a DNA glycosylase that recognizes and removes damaged bases. Has a preference for oxidized purines, such as 7,8-dihydro-8-oxoguanine (8-oxoG). Has AP (apurinic/apyrimidinic) lyase activity and introduces nicks in the DNA strand. Cleaves the DNA backbone by beta-delta elimination to generate a single-strand break at the site of the removed base with both 3'- and 5'-phosphates. The protein is Formamidopyrimidine-DNA glycosylase of Escherichia coli O6:H1 (strain CFT073 / ATCC 700928 / UPEC).